The primary structure comprises 432 residues: Enolase (432 aa).

Position 167 (Q167) interacts with (2R)-2-phosphoglycerate. The active-site Proton donor is E209. Residues D246, E290, and D317 each contribute to the Mg(2+) site. Residues K342, R371, S372, and K393 each coordinate (2R)-2-phosphoglycerate. K342 functions as the Proton acceptor in the catalytic mechanism.

The protein belongs to the enolase family. In terms of assembly, component of the RNA degradosome, a multiprotein complex involved in RNA processing and mRNA degradation. The cofactor is Mg(2+).

The protein localises to the cytoplasm. Its subcellular location is the secreted. It localises to the cell surface. The enzyme catalyses (2R)-2-phosphoglycerate = phosphoenolpyruvate + H2O. Its pathway is carbohydrate degradation; glycolysis; pyruvate from D-glyceraldehyde 3-phosphate: step 4/5. Catalyzes the reversible conversion of 2-phosphoglycerate (2-PG) into phosphoenolpyruvate (PEP). It is essential for the degradation of carbohydrates via glycolysis. The protein is Enolase of Salmonella agona (strain SL483).